The primary structure comprises 262 residues: MRIAVIQFPGTNCEHETLVAVRECGMDGEIFRWNRPEQELCEFDGYVIPGGFSYQDRVRAGVIASKEPVMATLREEAANGKPIIGICNGFQILVESGILPFGDGVRLALAQNVMIRGGEIVRRGYYCAWTMLRHDAEEKRCSGSYILRRGEILSIPIAHAEGNLVASDRKVIERLIEDDQIVFRYCSPQGEIINEFPVNVNGSTENIAGISNPEGNVLGMMPHPERAFFAWQLPRKHPRIPGYGPGRKIFDSMKRYIEERRS.

In terms of domain architecture, Glutamine amidotransferase type-1 spans 2-238 (RIAVIQFPGT…FAWQLPRKHP (237 aa)). Cys-87 serves as the catalytic Nucleophile. Residues His-223 and Glu-225 contribute to the active site.

As to quaternary structure, part of the FGAM synthase complex composed of 1 PurL, 1 PurQ and 2 PurS subunits.

The protein resides in the cytoplasm. It catalyses the reaction N(2)-formyl-N(1)-(5-phospho-beta-D-ribosyl)glycinamide + L-glutamine + ATP + H2O = 2-formamido-N(1)-(5-O-phospho-beta-D-ribosyl)acetamidine + L-glutamate + ADP + phosphate + H(+). The enzyme catalyses L-glutamine + H2O = L-glutamate + NH4(+). The protein operates within purine metabolism; IMP biosynthesis via de novo pathway; 5-amino-1-(5-phospho-D-ribosyl)imidazole from N(2)-formyl-N(1)-(5-phospho-D-ribosyl)glycinamide: step 1/2. Functionally, part of the phosphoribosylformylglycinamidine synthase complex involved in the purines biosynthetic pathway. Catalyzes the ATP-dependent conversion of formylglycinamide ribonucleotide (FGAR) and glutamine to yield formylglycinamidine ribonucleotide (FGAM) and glutamate. The FGAM synthase complex is composed of three subunits. PurQ produces an ammonia molecule by converting glutamine to glutamate. PurL transfers the ammonia molecule to FGAR to form FGAM in an ATP-dependent manner. PurS interacts with PurQ and PurL and is thought to assist in the transfer of the ammonia molecule from PurQ to PurL. The polypeptide is Phosphoribosylformylglycinamidine synthase subunit PurQ (Methanothrix thermoacetophila (strain DSM 6194 / JCM 14653 / NBRC 101360 / PT) (Methanosaeta thermophila)).